We begin with the raw amino-acid sequence, 593 residues long: AT-rich interactive domain-containing protein 3A (593 aa).

The interval 14 to 222 (QQRARQELEA…PQLQPPDHGD (209 aa)) is disordered. Basic and acidic residues predominate over residues 41–53 (AAPDEDREPESAR). Low complexity predominate over residues 54-87 (MQRAQMAALAAMRAAAAGLGHPASPGGSEDGPPG). Ser77, Ser81, and Ser88 each carry phosphoserine. At Thr98 the chain carries Phosphothreonine. Residues Ser101 and Ser119 each carry the phosphoserine modification. Residues 104 to 127 (RGREGPGEEHFEDMASDEDMKPKW) are compositionally biased toward basic and acidic residues. An acidic region spans residues 119–156 (SDEDMKPKWEEEEMEEDLGEDEEEEEEDYEDEEEEEDE). Over residues 128-158 (EEEEMEEDLGEDEEEEEEDYEDEEEEEDEEG) the composition is skewed to acidic residues. The ARID domain occupies 238 to 330 (DPKRKEFLDD…YLYPYECEKR (93 aa)). Residues Ser353 and Ser362 each carry the phosphoserine modification. Glycyl lysine isopeptide (Lys-Gly) (interchain with G-Cter in SUMO2) cross-links involve residues Lys398, Lys399, Lys452, and Lys462. Residues 444-541 (AALEQLREKL…GVLFAQPPAP (98 aa)) form the REKLES domain. An important for nuclear localization region spans residues 445–488 (ALEQLREKLESAEPPEKKMALVADEQQRLMQRALQQNFLAMAAQ). The segment at 490–513 (PMSIRINSQASESRQDSAVNLTGT) is homodimerization. Disordered regions lie at residues 497–516 (SQAS…TNGS) and 539–593 (PAPT…NSLP). The segment at 537 to 557 (QPPAPTPTSAPNKGGGGGGGS) is important for cytoplasmic localization. A compositionally biased stretch (gly residues) spans 549-576 (KGGGGGGGSSSNAGGRGGNTGTSGGQAG). Low complexity predominate over residues 580 to 593 (LSTPSTSTSNNSLP).

Homodimer. Heterodimer with ARID3B. Interacts with E2F1. Interacts with GTF2I and BTK. As to expression, widely expressed, with highest expression in skeletal muscle, thalamus, and colon.

The protein resides in the nucleus. It is found in the cytoplasm. Functionally, transcription factor which may be involved in the control of cell cycle progression by the RB1/E2F1 pathway and in B-cell differentiation. This is AT-rich interactive domain-containing protein 3A (ARID3A) from Homo sapiens (Human).